The sequence spans 628 residues: Alpha pinene synthase, chloroplastic (628 aa).

A chloroplast-targeting transit peptide spans 1–46; that stretch reads MSLGCITPLASAMVGPKLVRPLIHHNPLFHHKPLNRPYLQTKIPLR. Positions 381, 385, and 532 each coordinate Mg(2+). Residues 381-385 carry the DDXXD motif motif; sequence DDMYD.

The protein belongs to the terpene synthase family. Tpsa subfamily. It depends on Mg(2+) as a cofactor. Requires Mn(2+) as cofactor.

It localises to the plastid. The protein resides in the chloroplast. The catalysed reaction is (2E)-geranyl diphosphate = alpha-pinene + diphosphate. It functions in the pathway secondary metabolite biosynthesis; terpenoid biosynthesis. In terms of biological role, monoterpene synthase involved in the biosynthesis of volatile compounds. Mediates the conversion of (2E)-geranyl diphosphate (GPP) into alpha-pinene. This chain is Alpha pinene synthase, chloroplastic, found in Chamaecyparis formosensis (Formosan cypress).